Consider the following 777-residue polypeptide: Homoaconitase, mitochondrial (777 aa).

A mitochondrion-targeting transit peptide spans 1–35; sequence MFKRTGSLLLRCRASRVPVIGRPLISLSTSSTSLS. The tract at residues 47–74 is disordered; that stretch reads LRRYTEASSSTTQTSPSSSSWPAPDAAP. The span at 52–74 shows a compositional bias: low complexity; it reads EASSSTTQTSPSSSSWPAPDAAP. The [4Fe-4S] cluster site is built by C398, C466, and C469.

Belongs to the aconitase/IPM isomerase family. [4Fe-4S] cluster serves as cofactor.

It is found in the mitochondrion. It carries out the reaction (2R,3S)-homoisocitrate = cis-homoaconitate + H2O. It participates in amino-acid biosynthesis; L-lysine biosynthesis via AAA pathway; L-alpha-aminoadipate from 2-oxoglutarate: step 3/5. Functionally, catalyzes the reversible hydration of cis-homoaconitate to (2R,3S)-homoisocitrate, a step in the alpha-aminoadipate pathway for lysine biosynthesis. The protein is Homoaconitase, mitochondrial (lys4) of Aspergillus fumigatus (strain ATCC MYA-4609 / CBS 101355 / FGSC A1100 / Af293) (Neosartorya fumigata).